Here is a 390-residue protein sequence, read N- to C-terminus: Alanine racemase (390 aa).

Lysine 46 serves as the catalytic Proton acceptor; specific for D-alanine. At lysine 46 the chain carries N6-(pyridoxal phosphate)lysine. Residue arginine 144 participates in substrate binding. Tyrosine 275 serves as the catalytic Proton acceptor; specific for L-alanine. Methionine 323 contacts substrate.

Belongs to the alanine racemase family. Pyridoxal 5'-phosphate serves as cofactor.

It carries out the reaction L-alanine = D-alanine. Its pathway is amino-acid biosynthesis; D-alanine biosynthesis; D-alanine from L-alanine: step 1/1. Its function is as follows. Catalyzes the interconversion of L-alanine and D-alanine. May also act on other amino acids. This chain is Alanine racemase (alr), found in Mycolicibacterium vanbaalenii (strain DSM 7251 / JCM 13017 / BCRC 16820 / KCTC 9966 / NRRL B-24157 / PYR-1) (Mycobacterium vanbaalenii).